The primary structure comprises 74 residues: UPF0352 protein HAPS_0210 (74 aa).

This sequence belongs to the UPF0352 family.

This Glaesserella parasuis serovar 5 (strain SH0165) (Haemophilus parasuis) protein is UPF0352 protein HAPS_0210.